The sequence spans 535 residues: NEDD8-activating enzyme E1 regulatory subunit (535 aa).

An interaction with UBA3 region spans residues Asp-332–Asn-345.

This sequence belongs to the ubiquitin-activating E1 family. ULA1 subfamily. In terms of assembly, heterodimer of UBA3 and NAE1. The complex binds NEDD8 and UBE2M.

It functions in the pathway protein modification; protein neddylation. Functionally, regulatory subunit of the dimeric UBA3-NAE1 E1 enzyme. E1 activates NEDD8 by first adenylating its C-terminal glycine residue with ATP, thereafter linking this residue to the side chain of the catalytic cysteine, yielding a NEDD8-UBA3 thioester and free AMP. E1 finally transfers NEDD8 to the catalytic cysteine of UBE2M. The covalent attachment of NEDD8 to target proteins is known as 'neddylation' and the process is involved in the regulation of cell growth, viability and development. In Gallus gallus (Chicken), this protein is NEDD8-activating enzyme E1 regulatory subunit (NAE1).